Here is a 614-residue protein sequence, read N- to C-terminus: Protein NRT1/ PTR FAMILY 7.3 (614 aa).

The next 2 helical transmembrane spans lie at 41-61 and 87-107; these read WVAG…FFGV and WTGT…SYWG. Thr-111 carries the post-translational modification Phosphothreonine. 9 consecutive transmembrane segments (helical) span residues 114 to 134, 152 to 172, 196 to 216, 226 to 246, 355 to 375, 390 to 410, 435 to 455, 515 to 535, and 559 to 579; these read IFQV…YMFL, MMEI…YGGY, IAFF…SNTI, WALG…LFLV, PIWL…SLFV, IPPA…IFLY, MGIG…VECY, LCMM…TMVV, and FYFL…ACAK. Residues 592–614 form a disordered region; sequence MQDMSDDDYDTESEEEREKDSKV. Positions 593-606 are enriched in acidic residues; sequence QDMSDDDYDTESEE.

Belongs to the major facilitator superfamily. Proton-dependent oligopeptide transporter (POT/PTR) (TC 2.A.17) family. In terms of tissue distribution, high expression in roots. Barely detected in shoots. Expressed in root pericycle cells close to the xylem.

The protein resides in the cell membrane. Its function is as follows. Low-affinity proton-dependent bidirectional nitrate transporter. Involved in nitrate loading into xylem and not in nitrate uptake. Not involved in histidine or dipeptides transport. This is Protein NRT1/ PTR FAMILY 7.3 (NPF7.3) from Arabidopsis thaliana (Mouse-ear cress).